The primary structure comprises 349 residues: SUMO-activating enzyme subunit 1 (349 aa).

Methionine 1 bears the N-acetylmethionine mark. Residue valine 2 is modified to N-acetylvaline; in SUMO-activating enzyme subunit 1, N-terminally processed. At serine 15 the chain carries Phosphoserine. The residue at position 201 (lysine 201) is an N6-acetyllysine.

The protein belongs to the ubiquitin-activating E1 family. Heterodimer of SAE1 and UBA2/SAE2. The heterodimer corresponds to the two domains that are encoded on a single polypeptide chain in ubiquitin-activating enzyme E1. Interacts with UBE2I.

It is found in the nucleus. It participates in protein modification; protein sumoylation. Functionally, the heterodimer acts as an E1 ligase for SUMO1, SUMO2, SUMO3, and probably SUMO4. It mediates ATP-dependent activation of SUMO proteins followed by formation of a thioester bond between a SUMO protein and a conserved active site cysteine residue on UBA2/SAE2. This Rattus norvegicus (Rat) protein is SUMO-activating enzyme subunit 1 (Sae1).